We begin with the raw amino-acid sequence, 135 residues long: Large ribosomal subunit protein bL17 (135 aa).

Belongs to the bacterial ribosomal protein bL17 family. Part of the 50S ribosomal subunit. Contacts protein L32.

This chain is Large ribosomal subunit protein bL17, found in Rhodopseudomonas palustris (strain BisB18).